A 58-amino-acid chain; its full sequence is Large ribosomal subunit protein bL32 (58 aa).

Basic residues predominate over residues 1-19 (MAVPKKRTSKSKKNMRKAN). The disordered stretch occupies residues 1-58 (MAVPKKRTSKSKKNMRKANWKNQAKLAAKKALSLGKSVETQRSHSFVHPRYEEEEEED). Low complexity predominate over residues 20–32 (WKNQAKLAAKKAL).

The protein belongs to the bacterial ribosomal protein bL32 family.

This is Large ribosomal subunit protein bL32 from Trichodesmium erythraeum (strain IMS101).